The chain runs to 455 residues: Probable cytosolic iron-sulfur protein assembly protein 1 (455 aa).

7 WD repeats span residues 31–70 (GHSS…TTSA), 90–129 (GHQR…DGSS), 163–202 (GHES…EFEC), 208–247 (EHSQ…DWFC), 253–292 (GHES…QCEA), 318–365 (YHDR…DEKS), and 380–453 (HASA…YAAT).

Belongs to the WD repeat CIA1 family.

Essential component of the cytosolic iron-sulfur (Fe/S) protein assembly machinery. Required for the maturation of extramitochondrial Fe/S proteins. The chain is Probable cytosolic iron-sulfur protein assembly protein 1 from Mycosarcoma maydis (Corn smut fungus).